The primary structure comprises 241 residues: 1-(5-phosphoribosyl)-5-[(5-phosphoribosylamino)methylideneamino] imidazole-4-carboxamide isomerase (241 aa).

Residue D10 is the Proton acceptor of the active site. D131 (proton donor) is an active-site residue.

The protein belongs to the HisA/HisF family.

It is found in the cytoplasm. The enzyme catalyses 1-(5-phospho-beta-D-ribosyl)-5-[(5-phospho-beta-D-ribosylamino)methylideneamino]imidazole-4-carboxamide = 5-[(5-phospho-1-deoxy-D-ribulos-1-ylimino)methylamino]-1-(5-phospho-beta-D-ribosyl)imidazole-4-carboxamide. Its pathway is amino-acid biosynthesis; L-histidine biosynthesis; L-histidine from 5-phospho-alpha-D-ribose 1-diphosphate: step 4/9. In Bifidobacterium longum (strain NCC 2705), this protein is 1-(5-phosphoribosyl)-5-[(5-phosphoribosylamino)methylideneamino] imidazole-4-carboxamide isomerase.